Reading from the N-terminus, the 94-residue chain is Integration host factor subunit beta (94 aa).

The protein belongs to the bacterial histone-like protein family. In terms of assembly, heterodimer of an alpha and a beta chain.

In terms of biological role, this protein is one of the two subunits of integration host factor, a specific DNA-binding protein that functions in genetic recombination as well as in transcriptional and translational control. In Aeromonas hydrophila subsp. hydrophila (strain ATCC 7966 / DSM 30187 / BCRC 13018 / CCUG 14551 / JCM 1027 / KCTC 2358 / NCIMB 9240 / NCTC 8049), this protein is Integration host factor subunit beta.